The following is a 396-amino-acid chain: F-box protein At2g21930 (396 aa).

Residues 19–65 (SGNSVQIPFDLIPEILKRLPVKTLARFLSVSKEYTSIIRNRDFMKSY) form the F-box domain.

The chain is F-box protein At2g21930 from Arabidopsis thaliana (Mouse-ear cress).